Here is a 928-residue protein sequence, read N- to C-terminus: BCAS3 microtubule associated cell migration factor (928 aa).

An N-acetylmethionine modification is found at methionine 1. One copy of the WD repeat lies at 69-114 (DLNDTSRNLEFHEIHSTGNEPPLLIMIGYSDGMQVWSIPISGEAQE). A Glycyl lysine isopeptide (Lys-Gly) (interchain with G-Cter in SUMO1); alternate cross-link involves residue lysine 215. Lysine 215 is covalently cross-linked (Glycyl lysine isopeptide (Lys-Gly) (interchain with G-Cter in SUMO2); alternate). Required for recruitment to preautophagosomal structure in response to mitophagy regions lie at residues 254–312 (RGGA…SRRS) and 437–560 (YGGQ…IKAP). Serine 461, serine 480, and serine 488 each carry phosphoserine. Disordered regions lie at residues 472-515 (TSKQ…PGNP) and 755-777 (TTVISSSSSVLQSHGPSDTPQPL). Composition is skewed to low complexity over residues 480-494 (SPVPGLSSSPSGSPL), 505-514 (NNFTNNNPGN), and 755-771 (TTVISSSSSVLQSHGPS). Phosphoserine occurs at positions 838, 886, and 898. The tract at residues 868-928 (ESPSRDVVGS…PLSLFPTGFP (61 aa)) is disordered. The segment covering 887–901 (IETLSNSSGSTSGSI) has biased composition (low complexity).

This sequence belongs to the BCAS3 family. As to quaternary structure, interacts with histone H3, ESR1, KAT2B and PELP1; the interactions occur in a estrogen-dependent manner. Interacts with beta-tubulin and VIM. Interacts (via C-terminal) with PHAF1; the interaction is requrired for the association with the phagophore. In terms of tissue distribution, expressed in stomach, liver, lung, kidney, prostate, testis, thyroid gland, adrenal gland, brain, heart, skeletal muscle, colon, spleen, small intestine, placenta, blood leukocyte and mammary epithelial cells. Expressed in undifferentiated ES cells. Expressed in blood islands and nascent blood vessels derived from differentiated ES cells into embryoid bodies (BD). Expressed in endothelial cells. Not detected in brain. Expressed in brain tumors (at protein level). Expressed in brain. Highly expressed in breast cancers and in glioma cell lines.

The protein resides in the nucleus. It localises to the cytoplasm. The protein localises to the cytoskeleton. Its subcellular location is the preautophagosomal structure. Functionally, plays a role in angiogenesis. Participates in the regulation of cell polarity and directional endothelial cell migration by mediating both the activation and recruitment of CDC42 and the reorganization of the actin cytoskeleton at the cell leading edge. Promotes filipodia formation. Functions synergistically with PELP1 as a transcriptional coactivator of estrogen receptor-responsive genes. Stimulates histone acetyltransferase activity. Binds to chromatin. Plays a regulatory role in autophagic activity. In complex with PHAF1, associates with the preautophagosomal structure during both non-selective and selective autophagy. Probably binds phosphatidylinositol 3-phosphate (PtdIns3P) which would mediate the recruitment preautophagosomal structures. The polypeptide is BCAS3 microtubule associated cell migration factor (Homo sapiens (Human)).